Consider the following 221-residue polypeptide: Eukaryotic translation initiation factor 3 subunit K (221 aa).

One can recognise a PCI domain in the interval 46–207; it reads YDLEANLACL…NIKTKHITEK (162 aa).

It belongs to the eIF-3 subunit K family. In terms of assembly, component of the eukaryotic translation initiation factor 3 (eIF-3) complex.

It localises to the cytoplasm. In terms of biological role, component of the eukaryotic translation initiation factor 3 (eIF-3) complex, which is involved in protein synthesis of a specialized repertoire of mRNAs and, together with other initiation factors, stimulates binding of mRNA and methionyl-tRNAi to the 40S ribosome. The eIF-3 complex specifically targets and initiates translation of a subset of mRNAs involved in cell proliferation. This chain is Eukaryotic translation initiation factor 3 subunit K, found in Aedes aegypti (Yellowfever mosquito).